A 192-amino-acid polypeptide reads, in one-letter code: Fe/S biogenesis protein NfuA (192 aa).

Residues C149 and C152 each coordinate [4Fe-4S] cluster.

The protein belongs to the NfuA family. In terms of assembly, homodimer. It depends on [4Fe-4S] cluster as a cofactor.

In terms of biological role, involved in iron-sulfur cluster biogenesis. Binds a 4Fe-4S cluster, can transfer this cluster to apoproteins, and thereby intervenes in the maturation of Fe/S proteins. Could also act as a scaffold/chaperone for damaged Fe/S proteins. The polypeptide is Fe/S biogenesis protein NfuA (Tolumonas auensis (strain DSM 9187 / NBRC 110442 / TA 4)).